We begin with the raw amino-acid sequence, 219 residues long: Large ribosomal subunit protein eL13 (219 aa).

The disordered stretch occupies residues 198-219 (KDAAENPDDVTKAPTAVKRNKT).

Belongs to the eukaryotic ribosomal protein eL13 family. Component of the 60S large ribosomal subunit (LSU).

The protein resides in the cytoplasm. Its function is as follows. Component of the ribosome, a large ribonucleoprotein complex responsible for the synthesis of proteins in the cell. The small ribosomal subunit (SSU) binds messenger RNAs (mRNAs) and translates the encoded message by selecting cognate aminoacyl-transfer RNA (tRNA) molecules. The large subunit (LSU) contains the ribosomal catalytic site termed the peptidyl transferase center (PTC), which catalyzes the formation of peptide bonds, thereby polymerizing the amino acids delivered by tRNAs into a polypeptide chain. The nascent polypeptides leave the ribosome through a tunnel in the LSU and interact with protein factors that function in enzymatic processing, targeting, and the membrane insertion of nascent chains at the exit of the ribosomal tunnel. As part of the LSU, it is probably required for its formation and the maturation of rRNAs. The polypeptide is Large ribosomal subunit protein eL13 (RpL13) (Spodoptera frugiperda (Fall armyworm)).